A 79-amino-acid polypeptide reads, in one-letter code: U16-theraphotoxin-Cg1a (79 aa).

Positions 1-19 are cleaved as a signal peptide; that stretch reads MRALLIIAGLALFLVVCNA. Residues 20 to 44 constitute a propeptide that is removed on maturation; it reads SQVNEQRKLNEMLSVMFAVEEPQER. Intrachain disulfides connect Cys47–Cys62, Cys54–Cys67, and Cys61–Cys74.

Belongs to the neurotoxin 10 (Hwtx-1) family. 34 (Jztx-26) subfamily. As to expression, expressed by the venom gland.

Its subcellular location is the secreted. Probable ion channel inhibitor. The sequence is that of U16-theraphotoxin-Cg1a from Chilobrachys guangxiensis (Chinese earth tiger tarantula).